Reading from the N-terminus, the 289-residue chain is Phosphatidylglycerol--prolipoprotein diacylglyceryl transferase (289 aa).

Transmembrane regions (helical) follow at residues 23–43 (ALHW…WLAV), 61–81 (LLYM…VLFY), 99–119 (GGMS…WFAH), 125–145 (FFQV…AGRL), 199–219 (SQLY…NLFI), 226–246 (GSVS…TEFF), and 259–279 (LFSM…LMMV). Arg-144 contributes to the a 1,2-diacyl-sn-glycero-3-phospho-(1'-sn-glycerol) binding site.

It belongs to the Lgt family.

It localises to the cell inner membrane. The catalysed reaction is L-cysteinyl-[prolipoprotein] + a 1,2-diacyl-sn-glycero-3-phospho-(1'-sn-glycerol) = an S-1,2-diacyl-sn-glyceryl-L-cysteinyl-[prolipoprotein] + sn-glycerol 1-phosphate + H(+). It participates in protein modification; lipoprotein biosynthesis (diacylglyceryl transfer). Catalyzes the transfer of the diacylglyceryl group from phosphatidylglycerol to the sulfhydryl group of the N-terminal cysteine of a prolipoprotein, the first step in the formation of mature lipoproteins. This chain is Phosphatidylglycerol--prolipoprotein diacylglyceryl transferase, found in Pectobacterium carotovorum subsp. carotovorum (strain PC1).